A 393-amino-acid polypeptide reads, in one-letter code: Sialyltransferase-like protein 1 (393 aa).

Over 1–8 the chain is Cytoplasmic; that stretch reads MKRPLRRP. Residues 9–27 form a helical; Signal-anchor for type II membrane protein membrane-spanning segment; the sequence is FAVLLFVVLCAAASFPSVL. Over 28–393 the chain is Lumenal; it reads RRSVGPAPVL…IAVPPVVFYH (366 aa). Residues N49, N212, and N258 are each glycosylated (N-linked (GlcNAc...) asparagine).

Belongs to the glycosyltransferase 29 family.

The protein localises to the golgi apparatus membrane. In terms of biological role, possesses sialyltransferase-like activity in vitro. Transfers sialic acid to the oligosaccharide Gal-beta-1,3-GalNAc and to glycoproteins such as asialofetuin, alpha-1-acid glycoprotein (NeuAc-alpha-2,3-Gal-beta-1,3-GalNAc-) and andasialo-alpha-1-acid glycoprotein. The transferred sialic acid is linked to galactose of Gal-beta-1,3-GalNAc through alpha-2,6-linkage. In Oryza sativa subsp. indica (Rice), this protein is Sialyltransferase-like protein 1.